The sequence spans 99 residues: CTP synthase (99 aa).

The Glutamine amidotransferase type-1 domain occupies 1–99 (TMVTKLEKDS…FIKAIIENNK (99 aa)). Arginine 28 provides a ligand contact to L-glutamine. Residues histidine 73 and glutamate 75 contribute to the active site.

The protein belongs to the CTP synthase family. As to quaternary structure, homotetramer.

It carries out the reaction UTP + L-glutamine + ATP + H2O = CTP + L-glutamate + ADP + phosphate + 2 H(+). The catalysed reaction is L-glutamine + H2O = L-glutamate + NH4(+). The enzyme catalyses UTP + NH4(+) + ATP = CTP + ADP + phosphate + 2 H(+). The protein operates within pyrimidine metabolism; CTP biosynthesis via de novo pathway; CTP from UDP: step 2/2. With respect to regulation, allosterically activated by GTP, when glutamine is the substrate; GTP has no effect on the reaction when ammonia is the substrate. The allosteric effector GTP functions by stabilizing the protein conformation that binds the tetrahedral intermediate(s) formed during glutamine hydrolysis. Inhibited by the product CTP, via allosteric rather than competitive inhibition. Catalyzes the ATP-dependent amination of UTP to CTP with either L-glutamine or ammonia as the source of nitrogen. Regulates intracellular CTP levels through interactions with the four ribonucleotide triphosphates. This is CTP synthase from Mycoplasma capricolum subsp. capripneumoniae.